The following is a 377-amino-acid chain: GTP 3',8-cyclase (377 aa).

The segment at 1-29 is disordered; the sequence is MTTRLYLSPTPPRNDREGASKSTSASIKH. Residues 45–271 form the Radical SAM core domain; that stretch reads RFGRIARDLR…FTLSPAKEPR (227 aa). Arg-54 lines the GTP pocket. [4Fe-4S] cluster-binding residues include Cys-61 and Cys-65. Residue Tyr-67 coordinates S-adenosyl-L-methionine. Cys-68 is a binding site for [4Fe-4S] cluster. Arg-105 provides a ligand contact to GTP. Gly-109 is an S-adenosyl-L-methionine binding site. Position 140 (Thr-140) interacts with GTP. Residue Ser-164 participates in S-adenosyl-L-methionine binding. Residue Lys-201 coordinates GTP. Position 235 (Met-235) interacts with S-adenosyl-L-methionine. 2 residues coordinate [4Fe-4S] cluster: Cys-304 and Cys-307. 309–311 provides a ligand contact to GTP; sequence RSR. Cys-321 provides a ligand contact to [4Fe-4S] cluster.

It belongs to the radical SAM superfamily. MoaA family. As to quaternary structure, monomer and homodimer. [4Fe-4S] cluster is required as a cofactor.

The catalysed reaction is GTP + AH2 + S-adenosyl-L-methionine = (8S)-3',8-cyclo-7,8-dihydroguanosine 5'-triphosphate + 5'-deoxyadenosine + L-methionine + A + H(+). It participates in cofactor biosynthesis; molybdopterin biosynthesis. In terms of biological role, catalyzes the cyclization of GTP to (8S)-3',8-cyclo-7,8-dihydroguanosine 5'-triphosphate. The sequence is that of GTP 3',8-cyclase from Corynebacterium glutamicum (strain R).